Consider the following 179-residue polypeptide: Large ribosomal subunit protein uL5 (179 aa).

This sequence belongs to the universal ribosomal protein uL5 family. In terms of assembly, part of the 50S ribosomal subunit; part of the 5S rRNA/L5/L18/L25 subcomplex. Contacts the 5S rRNA and the P site tRNA. Forms a bridge to the 30S subunit in the 70S ribosome.

In terms of biological role, this is one of the proteins that bind and probably mediate the attachment of the 5S RNA into the large ribosomal subunit, where it forms part of the central protuberance. In the 70S ribosome it contacts protein S13 of the 30S subunit (bridge B1b), connecting the 2 subunits; this bridge is implicated in subunit movement. Contacts the P site tRNA; the 5S rRNA and some of its associated proteins might help stabilize positioning of ribosome-bound tRNAs. The chain is Large ribosomal subunit protein uL5 from Prochlorococcus marinus (strain MIT 9312).